The sequence spans 283 residues: Polyamine aminopropyltransferase (283 aa).

The region spanning 2–237 (ELWYTEEHTD…GHWLFGFASK (236 aa)) is the PABS domain. S-methyl-5'-thioadenosine is bound at residue Gln31. Spermidine is bound by residues His62 and Asp86. Residues Glu106 and 137-138 (DG) contribute to the S-methyl-5'-thioadenosine site. Asp155 acts as the Proton acceptor in catalysis. 155 to 158 (DSTD) provides a ligand contact to spermidine. Pro162 provides a ligand contact to S-methyl-5'-thioadenosine.

It belongs to the spermidine/spermine synthase family. In terms of assembly, homodimer or homotetramer.

It localises to the cytoplasm. The enzyme catalyses S-adenosyl 3-(methylsulfanyl)propylamine + putrescine = S-methyl-5'-thioadenosine + spermidine + H(+). It participates in amine and polyamine biosynthesis; spermidine biosynthesis; spermidine from putrescine: step 1/1. Catalyzes the irreversible transfer of a propylamine group from the amino donor S-adenosylmethioninamine (decarboxy-AdoMet) to putrescine (1,4-diaminobutane) to yield spermidine. This is Polyamine aminopropyltransferase from Clostridium perfringens (strain SM101 / Type A).